The primary structure comprises 197 residues: uncharacterized protein (197 aa).

Residues 1 to 31 are disordered; that stretch reads MMHFRKKSSISNTSDHDGANRASDVKISEDD. Phosphoserine is present on residues Ser-11 and Ser-23. A compositionally biased stretch (basic and acidic residues) spans 14–31; the sequence is SDHDGANRASDVKISEDD. Residues Lys-26 and Lys-32 each participate in a glycyl lysine isopeptide (Lys-Gly) (interchain with G-Cter in ubiquitin) cross-link. A disordered region spans residues 157-197; that stretch reads VGGASSQMYGEQAVYQPQQHVQTEEKQKKKKKGLFGRMKKK. The segment covering 158-177 has biased composition (polar residues); it reads GGASSQMYGEQAVYQPQQHV. Positions 184 to 197 are enriched in basic residues; sequence KKKKKGLFGRMKKK.

To yeast YGR273c.

This is an uncharacterized protein from Saccharomyces cerevisiae (strain ATCC 204508 / S288c) (Baker's yeast).